A 1820-amino-acid polypeptide reads, in one-letter code: Cation channel sperm-associated targeting subunit tau (1820 aa).

Positions 87–222 constitute a C2 domain; it reads DSEELEITQE…QKGCFIEEVQ (136 aa). Disordered stretches follow at residues 360–383, 403–443, 695–722, and 838–857; these read SEETNIDEASENTKSNHPEEELEN, LLDN…TEVH, EVSMNSEAREKSSSPLLSIHDKSSSSME, and SSTKKKHLISEVPNSKSGSS. Polar residues predominate over residues 415 to 443; that stretch reads PTLNQSDQDNSTADASKNDESTPSPTEVH.

Component of the CatSper complex or CatSpermasome composed of the core pore-forming members CATSPER1, CATSPER2, CATSPER3 and CATSPER4 as well as auxiliary members CATSPERB, CATSPERG, CATSPERD, CATSPERE, CATSPERZ, C2CD6/CATSPERT, TMEM249, TMEM262 and EFCAB9. HSPA1 may be an additional auxiliary complex member. The core complex members CATSPER1, CATSPER2, CATSPER3 and CATSPER4 form a heterotetrameric channel. The auxiliary CATSPERB, CATSPERG, CATSPERD and CATSPERE subunits form a pavilion-like structure over the pore which stabilizes the complex through interactions with CATSPER4, CATSPER3, CATSPER1 and CATSPER2 respectively. SLCO6C1 interacts with CATSPERE and TMEM262/CATSPERH interacts with CATSPERB, further stabilizing the complex. C2CD6/CATSPERT interacts at least with CATSPERD and is required for targeting the CatSper complex in the flagellar membrane. Expressed in testis (at protein level).

It is found in the cell projection. It localises to the cilium. Its subcellular location is the flagellum membrane. In terms of biological role, auxiliary component of the CatSper complex, a complex involved in sperm cell hyperactivation. Sperm cell hyperactivation is needed for sperm motility which is essential late in the preparation of sperm for fertilization. Required for CatSper complex targeting and trafficking into the quadrilinear nanodomains. Targets the preassembled CatSper complexes to elongating flagella, where it links the channel-carrying vesicles and motor proteins. This Homo sapiens (Human) protein is Cation channel sperm-associated targeting subunit tau.